The primary structure comprises 412 residues: Imidazolonepropionase (412 aa).

Positions 76 and 78 each coordinate Fe(3+). Zn(2+)-binding residues include H76 and H78. 4-imidazolone-5-propanoate contacts are provided by R85, Y148, and H181. Y148 contributes to the N-formimidoyl-L-glutamate binding site. H242 contacts Fe(3+). Zn(2+) is bound at residue H242. E245 is a binding site for 4-imidazolone-5-propanoate. D317 contacts Fe(3+). Residue D317 participates in Zn(2+) binding. Residues N319 and G321 each coordinate N-formimidoyl-L-glutamate. 4-imidazolone-5-propanoate is bound at residue S322.

Belongs to the metallo-dependent hydrolases superfamily. HutI family. Zn(2+) is required as a cofactor. The cofactor is Fe(3+).

The protein resides in the cytoplasm. The enzyme catalyses 4-imidazolone-5-propanoate + H2O = N-formimidoyl-L-glutamate. It participates in amino-acid degradation; L-histidine degradation into L-glutamate; N-formimidoyl-L-glutamate from L-histidine: step 3/3. In terms of biological role, catalyzes the hydrolytic cleavage of the carbon-nitrogen bond in imidazolone-5-propanoate to yield N-formimidoyl-L-glutamate. It is the third step in the universal histidine degradation pathway. This chain is Imidazolonepropionase, found in Staphylococcus aureus (strain MSSA476).